We begin with the raw amino-acid sequence, 267 residues long: Matrilysin (267 aa).

An N-terminal signal peptide occupies residues 1-17 (MRLTVLCAVCLLPGSLA). Residues 18–94 (LPLPQEAGGM…PRCGVPDVAE (77 aa)) constitute a propeptide, activation peptide. Positions 85 to 92 (PRCGVPDV) match the Cysteine switch motif. C87 contributes to the Zn(2+) binding site. D153 is a binding site for Ca(2+). Residues H163 and D165 each coordinate Zn(2+). 4 residues coordinate Ca(2+): D170, G171, G173, and T175. H178 is a Zn(2+) binding site. Ca(2+) is bound by residues G185, G187, and D189. Position 191 (H191) interacts with Zn(2+). Ca(2+) is bound by residues D193 and E196. Position 214 (H214) interacts with Zn(2+). Residue E215 is part of the active site. The Zn(2+) site is built by H218 and H224.

The protein belongs to the peptidase M10A family. Ca(2+) is required as a cofactor. The cofactor is Zn(2+).

Its subcellular location is the secreted. The protein resides in the extracellular space. It localises to the extracellular matrix. The catalysed reaction is Cleavage of 14-Ala-|-Leu-15 and 16-Tyr-|-Leu-17 in B chain of insulin. No action on collagen types I, II, IV, V. Cleaves gelatin chain alpha2(I) &gt; alpha1(I).. Degrades casein, gelatins of types I, III, IV, and V, and fibronectin. Activates procollagenase. This is Matrilysin (MMP7) from Homo sapiens (Human).